Consider the following 322-residue polypeptide: Corticotropin-releasing factor-binding protein (322 aa).

The N-terminal stretch at 1 to 24 (MSPNFKLQCHFILILLTALRGESR) is a signal peptide. 5 disulfides stabilise this stretch: Cys-60–Cys-81, Cys-104–Cys-141, Cys-183–Cys-205, Cys-237–Cys-264, and Cys-277–Cys-318. Asn-204 is a glycosylation site (N-linked (GlcNAc...) asparagine).

Belongs to the CRF-binding protein family.

Its subcellular location is the secreted. Its function is as follows. Binds CRF and inactivates it. May prevent inappropriate pituitary-adrenal stimulation in pregnancy. The protein is Corticotropin-releasing factor-binding protein (Crhbp) of Mus musculus (Mouse).